Here is a 900-residue protein sequence, read N- to C-terminus: Alpha-actinin-3 (900 aa).

M1 is modified (N-acetylmethionine). The tract at residues 1–26 (MMMVMQPEGLGAGEGPFSGGGGGEYM) is disordered. An actin-binding region spans residues 1-260 (MMMVMQPEGL…IMTYVSCFYH (260 aa)). Positions 10–24 (LGAGEGPFSGGGGGE) are enriched in gly residues. Calponin-homology (CH) domains lie at 44-148 (KQQR…LRFA) and 157-263 (TSAK…HAFA). Spectrin repeat units lie at residues 287 to 397 (KLME…WLLS), 407 to 512 (HLAE…ALER), 522 to 633 (QLQL…TLQE), and 643 to 746 (RLRR…EVEN). EF-hand domains are found at residues 759-794 (EQLN…MGYD) and 795-830 (LGEV…ETAE). Ca(2+)-binding residues include D772, N776, M778, D783, D808, and N810.

This sequence belongs to the alpha-actinin family. As to quaternary structure, homodimer; antiparallel. Also forms heterodimers with ACTN2. Interacts with MYOZ1. In terms of tissue distribution, expression restricted to skeletal muscle fast (type 2) fibers (at protein level).

F-actin cross-linking protein which is thought to anchor actin to a variety of intracellular structures. This is a bundling protein. This chain is Alpha-actinin-3 (Actn3), found in Mus musculus (Mouse).